A 205-amino-acid chain; its full sequence is Dihydrofolate reductase (205 aa).

Residues M1–K201 enclose the DHFR domain. NADP(+) contacts are provided by residues A7 and G13–A19. D29 to R34 lines the substrate pocket. Residue R62–T64 coordinates NADP(+). Residue R78 coordinates substrate. NADP(+) is bound by residues S84–G86 and G118–L125.

The protein belongs to the dihydrofolate reductase family.

It carries out the reaction (6S)-5,6,7,8-tetrahydrofolate + NADP(+) = 7,8-dihydrofolate + NADPH + H(+). The protein operates within cofactor biosynthesis; tetrahydrofolate biosynthesis; 5,6,7,8-tetrahydrofolate from 7,8-dihydrofolate: step 1/1. Its function is as follows. Key enzyme in folate metabolism. Catalyzes an essential reaction for de novo glycine and purine synthesis, and for DNA precursor synthesis. In Encephalitozoon cuniculi (strain GB-M1) (Microsporidian parasite), this protein is Dihydrofolate reductase (DHFR-1).